Here is a 507-residue protein sequence, read N- to C-terminus: ATP synthase subunit alpha, chloroplastic (507 aa).

170-177 provides a ligand contact to ATP; the sequence is GDRQTGKT.

Belongs to the ATPase alpha/beta chains family. In terms of assembly, F-type ATPases have 2 components, CF(1) - the catalytic core - and CF(0) - the membrane proton channel. CF(1) has five subunits: alpha(3), beta(3), gamma(1), delta(1), epsilon(1). CF(0) has four main subunits: a, b, b' and c.

It localises to the plastid. The protein localises to the chloroplast thylakoid membrane. The catalysed reaction is ATP + H2O + 4 H(+)(in) = ADP + phosphate + 5 H(+)(out). Produces ATP from ADP in the presence of a proton gradient across the membrane. The alpha chain is a regulatory subunit. The chain is ATP synthase subunit alpha, chloroplastic from Populus alba (White poplar).